Consider the following 316-residue polypeptide: Pleckstrin homology domain-containing family F member 1 homolog (316 aa).

One can recognise a PH domain in the interval 35–131; sequence VLVGEGVLTK…WMAHINKCVE (97 aa). The FYVE-type zinc-finger motif lies at 152-212; the sequence is DTDASVCMHC…VCDACYERLK (61 aa). C158, C161, C175, C178, C183, C186, C204, and C207 together coordinate Zn(2+). The interval 215–316 is disordered; sequence PSSLGSGEDS…AAVATTGSHC (102 aa). Residues 244–253 show a composition bias toward acidic residues; that stretch reads SNDEDSDEET. Over residues 279–292 the composition is skewed to low complexity; the sequence is SSTITSPSSATTGS. A compositionally biased stretch (polar residues) spans 298–316; it reads VTPSVQSSPAAVATTGSHC.

As to quaternary structure, interacts with Gdi (Rab GDP dissociation inhibitor). In terms of tissue distribution, in ovaries, expressed both in the germ line cells and in the overlying somatic follicular epithelium.

It localises to the apical cell membrane. It is found in the endosome membrane. The protein localises to the cytoplasm. The protein resides in the cell cortex. Its function is as follows. Functions in the regulation of endosome morphology and late endosome formation. Has a role in controlling trafficking from early to late endosomes and from late endosomes to lysosomes. Important for localization of Gdi to the endosomal membranes. May function in controlling the activity of multiple regulators in the endocytic pathway, perhaps by positively controlling those involved in the early steps of endocytosis such as Rab5 and hrs, and negative regulating those involved in the late stages of endocytosis like car and VhaSFD. This is Pleckstrin homology domain-containing family F member 1 homolog from Drosophila melanogaster (Fruit fly).